Consider the following 145-residue polypeptide: Deoxyuridine 5'-triphosphate nucleotidohydrolase (145 aa).

Substrate is bound by residues 64-66 (RSG), N77, 81-83 (TID), and M91.

Belongs to the dUTPase family. The cofactor is Mg(2+).

It catalyses the reaction dUTP + H2O = dUMP + diphosphate + H(+). It functions in the pathway pyrimidine metabolism; dUMP biosynthesis; dUMP from dCTP (dUTP route): step 2/2. Functionally, this enzyme is involved in nucleotide metabolism: it produces dUMP, the immediate precursor of thymidine nucleotides and it decreases the intracellular concentration of dUTP so that uracil cannot be incorporated into DNA. The chain is Deoxyuridine 5'-triphosphate nucleotidohydrolase from Leptospira interrogans serogroup Icterohaemorrhagiae serovar copenhageni (strain Fiocruz L1-130).